The sequence spans 874 residues: Probable inorganic carbon transporter subunit DabA (874 aa).

Zn(2+)-binding residues include C398, D400, H580, and C595.

It belongs to the inorganic carbon transporter (TC 9.A.2) DabA family. In terms of assembly, forms a complex with DabB. Zn(2+) serves as cofactor.

The protein localises to the cell membrane. Functionally, part of an energy-coupled inorganic carbon pump. The polypeptide is Probable inorganic carbon transporter subunit DabA (Bacillus cereus (strain 03BB102)).